Consider the following 415-residue polypeptide: Phosphoglycerate kinase (415 aa).

Residues 27–29, R44, 67–70, R124, and R164 each bind substrate; these read DVN and HQGR. ATP is bound by residues E336 and 362–365; that span reads GGHM.

This sequence belongs to the phosphoglycerate kinase family. Monomer.

Its subcellular location is the cytoplasm. It carries out the reaction (2R)-3-phosphoglycerate + ATP = (2R)-3-phospho-glyceroyl phosphate + ADP. Its pathway is carbohydrate degradation; glycolysis; pyruvate from D-glyceraldehyde 3-phosphate: step 2/5. This is Phosphoglycerate kinase from Sulfolobus acidocaldarius (strain ATCC 33909 / DSM 639 / JCM 8929 / NBRC 15157 / NCIMB 11770).